The sequence spans 519 residues: Light-independent protochlorophyllide reductase subunit B (519 aa).

Aspartate 36 contributes to the [4Fe-4S] cluster binding site. Catalysis depends on aspartate 274, which acts as the Proton donor. 409–410 (GL) contacts substrate. Positions 426-465 (DEAGPSHHGGHSPKPSEAARTPDKVEERADPAPEAPQTGS) are disordered. Positions 445–456 (RTPDKVEERADP) are enriched in basic and acidic residues.

This sequence belongs to the ChlB/BchB/BchZ family. As to quaternary structure, protochlorophyllide reductase is composed of three subunits; BchL, BchN and BchB. Forms a heterotetramer of two BchB and two BchN subunits. [4Fe-4S] cluster serves as cofactor.

It carries out the reaction chlorophyllide a + oxidized 2[4Fe-4S]-[ferredoxin] + 2 ADP + 2 phosphate = protochlorophyllide a + reduced 2[4Fe-4S]-[ferredoxin] + 2 ATP + 2 H2O. Its pathway is porphyrin-containing compound metabolism; bacteriochlorophyll biosynthesis (light-independent). In terms of biological role, component of the dark-operative protochlorophyllide reductase (DPOR) that uses Mg-ATP and reduced ferredoxin to reduce ring D of protochlorophyllide (Pchlide) to form chlorophyllide a (Chlide). This reaction is light-independent. The NB-protein (BchN-BchB) is the catalytic component of the complex. The polypeptide is Light-independent protochlorophyllide reductase subunit B (Jannaschia sp. (strain CCS1)).